A 335-amino-acid chain; its full sequence is Leukocyte cell-derived chemotaxin-2 homolog (335 aa).

Positions 1–20 (MHLRTLHFLILIGIFIGGQT) are cleaved as a signal peptide. Disulfide bonds link cysteine 28/cysteine 66 and cysteine 39/cysteine 46. Aspartate 63 lines the Zn(2+) pocket. A glycan (N-linked (GlcNAc...) asparagine) is linked at asparagine 317.

It belongs to the LECT2/MIM-1 family. In terms of assembly, component of a multi-protein dma-1 receptor-ligand complex, which is activated upon binding of lect-2, mnr-1 and sax-7 ligands to promote the morphogenesis of dendrites which extend from the PVD neuronal body. Within the complex interacts with sax-7; the interaction is required for lect-2 dendritic localization and enhances the binding of the mnr-1 and sax-7 ligands to the dma-1 receptor-ligand complex. As to expression, expressed in body wall muscle cells, along the boundary of the lateral hypodermis, seam cells, processes of the nervous system including commissures, sensory dendrites in the head, and lateral nerve tracts, and motor neurons and some mechanosensory neurons such as ALM.

It localises to the secreted. The protein localises to the cell junction. Its subcellular location is the extracellular space. It is found in the extracellular matrix. The protein resides in the basement membrane. It localises to the cell projection. The protein localises to the dendrite. Its subcellular location is the perikaryon. It is found in the cell surface. Its function is as follows. Muscle-derived dendritic guidance cue, which is required for the formation of somatosensory dendritic arbors which extend from PVD and FLP sensory neurons during development. Ligand of a multi-protein dma-1 receptor-ligand complex, which is activated upon binding of lect-2, mnr-1 and sax-7 ligands to control the growth of dendrites that extend anteriorly from the PVD neuronal cell body. Enhances the binding of the mnr-1 and sax-7 ligands to the dma-1 receptor-ligand complex. Restricts the growth of secondary PVD dendritic branches and any irregularly positioned ectopic tertiary dendritic branches that originate from secondary branches, and promotes the formation of stable higher order dendritic branches. In particular, it is required for the formation of quaternary PVD dendritic branches and promotes their innervation of body wall muscles. Promotes self-avoidance of tertiary dendritic branches of PVD sensory neurons. Not required for the growth of dendrites that extend from AIY and PVQ interneurons, DVB GABergic neurons, PLM and ALM mechanosensory neurons, AFD sensory neurons and DD/VD and DA/DB motor neurons. The chain is Leukocyte cell-derived chemotaxin-2 homolog from Caenorhabditis elegans.